Here is a 207-residue protein sequence, read N- to C-terminus: Outer-membrane lipoprotein LolB (207 aa).

The N-terminal stretch at 1–21 (MPLPDFRLIRLLPLASLVLTA) is a signal peptide. The N-palmitoyl cysteine moiety is linked to residue Cys-22. Cys-22 is lipidated: S-diacylglycerol cysteine.

It belongs to the LolB family. In terms of assembly, monomer.

Its subcellular location is the cell outer membrane. Its function is as follows. Plays a critical role in the incorporation of lipoproteins in the outer membrane after they are released by the LolA protein. The chain is Outer-membrane lipoprotein LolB from Escherichia fergusonii (strain ATCC 35469 / DSM 13698 / CCUG 18766 / IAM 14443 / JCM 21226 / LMG 7866 / NBRC 102419 / NCTC 12128 / CDC 0568-73).